The following is a 282-amino-acid chain: Ribosome biogenesis GTPase A (282 aa).

The CP-type G domain maps to 14 to 178 (RREVTEKLKL…LLDTPGILWP (165 aa)). Residues 58-61 (NKAD), 86-87 (NS), 130-135 (NVGKST), and Gly-174 each bind GTP.

It belongs to the TRAFAC class YlqF/YawG GTPase family. MTG1 subfamily. As to quaternary structure, interacts with ctc. Interacts with the immature 50S ribosome subunit. 2 molecules of rbgA bind to one 50S subunit.

The protein resides in the cytoplasm. Essential protein that is required for a late step of 50S ribosomal subunit assembly. Has GTPase activity that is stimulated by interaction with the immature 50S ribosome subunit. Binds to the 23S rRNA. Required for the association of ribosomal proteins rplP and rpmA with the large subunit. The protein is Ribosome biogenesis GTPase A of Bacillus pumilus (strain SAFR-032).